The chain runs to 130 residues: Phosphoribosyl-AMP cyclohydrolase 1 (130 aa).

Position 77 (Asp77) interacts with Mg(2+). A Zn(2+)-binding site is contributed by Cys78. Residues Asp79 and Asp81 each coordinate Mg(2+). Residues Cys95 and Cys102 each contribute to the Zn(2+) site.

This sequence belongs to the PRA-CH family. In terms of assembly, homodimer. Mg(2+) is required as a cofactor. Zn(2+) serves as cofactor.

It is found in the cytoplasm. It carries out the reaction 1-(5-phospho-beta-D-ribosyl)-5'-AMP + H2O = 1-(5-phospho-beta-D-ribosyl)-5-[(5-phospho-beta-D-ribosylamino)methylideneamino]imidazole-4-carboxamide. It participates in amino-acid biosynthesis; L-histidine biosynthesis; L-histidine from 5-phospho-alpha-D-ribose 1-diphosphate: step 3/9. Its function is as follows. Catalyzes the hydrolysis of the adenine ring of phosphoribosyl-AMP. The polypeptide is Phosphoribosyl-AMP cyclohydrolase 1 (Pseudomonas fluorescens (strain ATCC BAA-477 / NRRL B-23932 / Pf-5)).